We begin with the raw amino-acid sequence, 162 residues long: NADH-quinone oxidoreductase subunit I (162 aa).

4Fe-4S ferredoxin-type domains are found at residues 53 to 83 (LRRY…IEAE) and 93 to 122 (TRYD…EGPN). 8 residues coordinate [4Fe-4S] cluster: C63, C66, C69, C73, C102, C105, C108, and C112.

The protein belongs to the complex I 23 kDa subunit family. As to quaternary structure, NDH-1 is composed of 14 different subunits. Subunits NuoA, H, J, K, L, M, N constitute the membrane sector of the complex. [4Fe-4S] cluster is required as a cofactor.

The protein localises to the cell inner membrane. It carries out the reaction a quinone + NADH + 5 H(+)(in) = a quinol + NAD(+) + 4 H(+)(out). In terms of biological role, NDH-1 shuttles electrons from NADH, via FMN and iron-sulfur (Fe-S) centers, to quinones in the respiratory chain. The immediate electron acceptor for the enzyme in this species is believed to be ubiquinone. Couples the redox reaction to proton translocation (for every two electrons transferred, four hydrogen ions are translocated across the cytoplasmic membrane), and thus conserves the redox energy in a proton gradient. In Maricaulis maris (strain MCS10) (Caulobacter maris), this protein is NADH-quinone oxidoreductase subunit I.